Consider the following 914-residue polypeptide: Translation initiation factor IF-2 (914 aa).

Disordered stretches follow at residues 52-84 (GGGKAAEGAAKAPAKAAAKGDAKTAAKGDVKAP) and 98-326 (AGGN…GVRL). Positions 57–68 (AEGAAKAPAKAA) are enriched in low complexity. Residues 69-84 (AKGDAKTAAKGDVKAP) show a composition bias toward basic and acidic residues. Low complexity predominate over residues 98–138 (AGGNGEAAAPPAQPGGTATTPAAQATPEAPARPGPAAARPS). Composition is skewed to pro residues over residues 139–169 (APAPGQPKPPAPGQPPRPGATPGPRPGPAPK) and 193–207 (PRPVPRPGAPRPGAP). Gly residues predominate over residues 236–296 (RPGGGRPGGP…GAAGAFGRPG (61 aa)). Residues 300–309 (RRGRKSKRQK) show a composition bias toward basic residues. The tr-type G domain maps to 421-581 (TRPPVVTVMG…AVLLTADAAL (161 aa)). GTP contacts are provided by residues 430-437 (GHVDHGKT), 469-473 (DTPGH), and 523-526 (NKID).

The protein belongs to the TRAFAC class translation factor GTPase superfamily. Classic translation factor GTPase family. IF-2 subfamily.

The protein localises to the cytoplasm. Its function is as follows. One of the essential components for the initiation of protein synthesis. Protects formylmethionyl-tRNA from spontaneous hydrolysis and promotes its binding to the 30S ribosomal subunits. Also involved in the hydrolysis of GTP during the formation of the 70S ribosomal complex. The chain is Translation initiation factor IF-2 from Mycobacterium avium (strain 104).